A 504-amino-acid chain; its full sequence is DnaJ homolog subfamily C member 3 (504 aa).

A signal peptide spans 1 to 31 (MVAPGSVTSRLGSVFPFLLVLVDLQYEGAEC). TPR repeat units lie at residues 37–70 (VEKH…DPDN), 72–104 (IAYY…KMDF), 105–138 (TAAR…NPSE), 154–187 (MQRL…CVWD), 189–221 (ELRE…KNDN), 222–255 (TEAF…DQDH), 268–301 (LNKL…EPSI), 306–339 (VRSK…EPDN), and 340–373 (VNAL…NEND). A disulfide bridge links Cys-248 with Cys-258. Ser-274 carries the phosphoserine; by FAM20C modification. A disulfide bridge links Cys-313 with Cys-329. The segment at 375–393 (QIREGLEKAQRLLKQSQKR) is flexible linker. One can recognise a J domain in the interval 394–462 (DYYKILGVKR…EMRKKFDDGE (69 aa)). The tract at residues 451–481 (DPEMRKKFDDGEDPLDAESQQGGGGNPFHRS) is disordered.

As to quaternary structure, interacts with EIF2AK4/GCN2; this interaction occurs under endoplasmic reticulum (ER) stress, hypothermic and amino acid starving stress conditions and inhibits EIF2AK4/GCN2 kinase activity. Interacts with EIF2AK3. Interacts with EIF2AK2. Forms a trimeric complex with DNAJB1 and HSPA8. Interacts with THAP12. In terms of tissue distribution, widely expressed with high level in the pancreas and testis. Also expressed in cell lines with different levels.

It is found in the endoplasmic reticulum. In terms of biological role, involved in the unfolded protein response (UPR) during endoplasmic reticulum (ER) stress. Acts as a negative regulator of the EIF2AK4/GCN2 kinase activity by preventing the phosphorylation of eIF-2-alpha at 'Ser-52' and hence attenuating general protein synthesis under ER stress, hypothermic and amino acid starving stress conditions. Co-chaperone of HSPA8/HSC70, it stimulates its ATPase activity. May inhibit both the autophosphorylation of EIF2AK2/PKR and the ability of EIF2AK2 to catalyze phosphorylation of the EIF2A. May inhibit EIF2AK3/PERK activity. This Homo sapiens (Human) protein is DnaJ homolog subfamily C member 3 (DNAJC3).